Here is a 143-residue protein sequence, read N- to C-terminus: Histone H2B.2, sperm (143 aa).

The segment at 1 to 52 (MPRSPSKSSPRKGSPRKGSPRKGSPKRGGKGAKRAGKGGRRRNVVKRRRRRR) is disordered. 5 short sequence motifs (SPKK motif) span residues 4-7 (SPSK), 9-12 (SPRK), 14-17 (SPRK), 19-22 (SPRK), and 24-27 (SPKR). Over residues 9–52 (SPRKGSPRKGSPRKGSPKRGGKGAKRAGKGGRRRNVVKRRRRRR) the composition is skewed to basic residues. A phosphoserine mark is found at serine 14, serine 19, and serine 24. Residue serine 130 is glycosylated (O-linked (GlcNAc) serine). Lysine 138 is covalently cross-linked (Glycyl lysine isopeptide (Lys-Gly) (interchain with G-Cter in ubiquitin)).

Belongs to the histone H2B family. The nucleosome is a histone octamer containing two molecules each of H2A, H2B, H3 and H4 assembled in one H3-H4 heterotetramer and two H2A-H2B heterodimers. The octamer wraps approximately 147 bp of DNA. Post-translationally, monoubiquitination of Lys-138 gives a specific tag for epigenetic transcriptional activation and is also prerequisite for histone H3 'Lys-4' and 'Lys-79' methylation. Phosphorylated on SPKK motifs 3, 4 and 5; which may regulate DNA binding. Dephosphorylated during maturation of spermatids to mature sperm and rephosphorylated at fertilization. In terms of processing, glcNAcylation at Ser-130 promotes monoubiquitination of Lys-138. It fluctuates in response to extracellular glucose, and associates with transcribed genes. Testis-specific.

It is found in the nucleus. Its subcellular location is the chromosome. Core component of nucleosome. Nucleosomes wrap and compact DNA into chromatin, limiting DNA accessibility to the cellular machineries which require DNA as a template. Histones thereby play a central role in transcription regulation, DNA repair, DNA replication and chromosomal stability. DNA accessibility is regulated via a complex set of post-translational modifications of histones, also called histone code, and nucleosome remodeling. The chain is Histone H2B.2, sperm from Lytechinus pictus (Painted sea urchin).